The chain runs to 152 residues: Probable ribose-5-phosphate isomerase B (152 aa).

12-13 contributes to the D-ribulose 5-phosphate binding site; that stretch reads DH. C70 functions as the Proton acceptor in the catalytic mechanism. 71 to 75 is a binding site for D-ribulose 5-phosphate; sequence GTGVG. H103 (proton donor) is an active-site residue. The D-ribulose 5-phosphate site is built by D104, R114, R137, and R141.

This sequence belongs to the LacAB/RpiB family. Homodimer.

The enzyme catalyses aldehydo-D-ribose 5-phosphate = D-ribulose 5-phosphate. It functions in the pathway carbohydrate degradation; pentose phosphate pathway; D-ribose 5-phosphate from D-ribulose 5-phosphate (non-oxidative stage): step 1/1. Its function is as follows. Catalyzes the interconversion of ribulose-5-P and ribose-5-P. The sequence is that of Probable ribose-5-phosphate isomerase B from Mycoplasma pneumoniae (strain ATCC 29342 / M129 / Subtype 1) (Mycoplasmoides pneumoniae).